A 126-amino-acid chain; its full sequence is uncharacterized protein (126 aa).

Over 1–9 (MCTYIITQS) the chain is Extracellular. A helical membrane pass occupies residues 10-30 (FFFLPCLSFLFFKLVGFFDSV). Residues 31–73 (FTAGKSLRIMFELPIFDKLTSCFAAIDCSATSLDIPFAEEELF) are Cytoplasmic-facing. A helical membrane pass occupies residues 74 to 94 (LMLVSEPVLIPFLFVFEFMLI). The Extracellular portion of the chain corresponds to 95-126 (CKPCGSRSRFGFPVKNVSDFEETLEFDPTLLV).

It is found in the membrane. This is an uncharacterized protein from Saccharomyces cerevisiae (strain ATCC 204508 / S288c) (Baker's yeast).